The following is a 286-amino-acid chain: Phosphoribosylaminoimidazole-succinocarboxamide synthase (286 aa).

Belongs to the SAICAR synthetase family.

The catalysed reaction is 5-amino-1-(5-phospho-D-ribosyl)imidazole-4-carboxylate + L-aspartate + ATP = (2S)-2-[5-amino-1-(5-phospho-beta-D-ribosyl)imidazole-4-carboxamido]succinate + ADP + phosphate + 2 H(+). The protein operates within purine metabolism; IMP biosynthesis via de novo pathway; 5-amino-1-(5-phospho-D-ribosyl)imidazole-4-carboxamide from 5-amino-1-(5-phospho-D-ribosyl)imidazole-4-carboxylate: step 1/2. The polypeptide is Phosphoribosylaminoimidazole-succinocarboxamide synthase (Actinobacillus succinogenes (strain ATCC 55618 / DSM 22257 / CCUG 43843 / 130Z)).